A 267-amino-acid polypeptide reads, in one-letter code: MSIRLGVNIDHIATLREARAIYEPDPLEAVFIAKNAGAHQITFHLREDRRHIHDSDVKRIIQSSPLPINIECALDEKIIDYLCGLKPQRITLVPEKREEITTEGGLDIESRYDSIRDTLKAFESCGIVSALFIDPKKESIFLARELGAQAVELHTGRYANLMLMAYSNLSRTHRALEEFAFPTQEINEEISRTLDDIAQCAKLATSTIDTRPLECFAGHGLNYQNVGAIAQIPQISELNIGHSIIARSVFVGLERAIIQMREAMCQK.

Residue Asn-8 coordinates 3-amino-2-oxopropyl phosphate. 10–11 contributes to the 1-deoxy-D-xylulose 5-phosphate binding site; that stretch reads DH. Position 19 (Arg-19) interacts with 3-amino-2-oxopropyl phosphate. Residue His-44 is the Proton acceptor of the active site. The 1-deoxy-D-xylulose 5-phosphate site is built by Arg-46 and His-51. The Proton acceptor role is filled by Glu-71. A 1-deoxy-D-xylulose 5-phosphate-binding site is contributed by Thr-101. His-219 serves as the catalytic Proton donor. 3-amino-2-oxopropyl phosphate is bound by residues Gly-220 and 241–242; that span reads GH.

This sequence belongs to the PNP synthase family. Homooctamer; tetramer of dimers.

It is found in the cytoplasm. It catalyses the reaction 3-amino-2-oxopropyl phosphate + 1-deoxy-D-xylulose 5-phosphate = pyridoxine 5'-phosphate + phosphate + 2 H2O + H(+). It participates in cofactor biosynthesis; pyridoxine 5'-phosphate biosynthesis; pyridoxine 5'-phosphate from D-erythrose 4-phosphate: step 5/5. Catalyzes the complicated ring closure reaction between the two acyclic compounds 1-deoxy-D-xylulose-5-phosphate (DXP) and 3-amino-2-oxopropyl phosphate (1-amino-acetone-3-phosphate or AAP) to form pyridoxine 5'-phosphate (PNP) and inorganic phosphate. This Helicobacter hepaticus (strain ATCC 51449 / 3B1) protein is Pyridoxine 5'-phosphate synthase.